The following is a 360-amino-acid chain: Phospho-N-acetylmuramoyl-pentapeptide-transferase (360 aa).

Helical transmembrane passes span 18–38 (VFSYVTFRAILGLLTALVFSL), 73–93 (TMGGLLILAGIFVSVLLWGDL), 97–117 (YVLVMLFVLGSFGTIGFIDDY), 134–154 (YILQSLAALVVAVFLYSSSTL), 168–188 (VMPQLGLVFIVLAYFTIVGAS), 199–219 (GLAIMPTVMVAGAFALIAYLS), 236–256 (AGELVIVCTAIVGAGLGFLWF), 263–283 (VFMGDVGSLALGAALGAIAVL), 288–308 (ILLVIMGGVFVMETVSVILQV), and 338–358 (VIVRFWIISLFLVLLGLATLK).

Belongs to the glycosyltransferase 4 family. MraY subfamily. Mg(2+) is required as a cofactor.

The protein localises to the cell inner membrane. The catalysed reaction is UDP-N-acetyl-alpha-D-muramoyl-L-alanyl-gamma-D-glutamyl-meso-2,6-diaminopimeloyl-D-alanyl-D-alanine + di-trans,octa-cis-undecaprenyl phosphate = di-trans,octa-cis-undecaprenyl diphospho-N-acetyl-alpha-D-muramoyl-L-alanyl-D-glutamyl-meso-2,6-diaminopimeloyl-D-alanyl-D-alanine + UMP. The protein operates within cell wall biogenesis; peptidoglycan biosynthesis. Functionally, catalyzes the initial step of the lipid cycle reactions in the biosynthesis of the cell wall peptidoglycan: transfers peptidoglycan precursor phospho-MurNAc-pentapeptide from UDP-MurNAc-pentapeptide onto the lipid carrier undecaprenyl phosphate, yielding undecaprenyl-pyrophosphoryl-MurNAc-pentapeptide, known as lipid I. This chain is Phospho-N-acetylmuramoyl-pentapeptide-transferase, found in Shewanella denitrificans (strain OS217 / ATCC BAA-1090 / DSM 15013).